A 312-amino-acid chain; its full sequence is Olfactory receptor 1D2 (312 aa).

Residues 1 to 25 (MDGGNQSEGSEFLLLGMSESPEQQQ) are Extracellular-facing. Asn-5 carries N-linked (GlcNAc...) asparagine glycosylation. A helical transmembrane segment spans residues 26–49 (ILFWMFLSMYLVTVVGNVLIILAI). Topologically, residues 50 to 57 (NSDSHLHT) are cytoplasmic. A helical transmembrane segment spans residues 58–79 (PMYFFLANLSFTDLFFVTNTIP). Topologically, residues 80 to 100 (KMLVNLQSQNKAISYAGCLTQ) are extracellular. A disulfide bridge links Cys-97 with Cys-189. A helical membrane pass occupies residues 101-120 (LYFLVSLVALDNLILAVMAY). The Cytoplasmic portion of the chain corresponds to 121 to 139 (DRYVAICCPLHYTTAMSPK). The chain crosses the membrane as a helical span at residues 140 to 158 (LCILLLSLCWVLSVLYGLI). The Extracellular portion of the chain corresponds to 159-196 (HTILMTRVTFCGSRKIHYIFCEMYVLLRMACSNIQINH). A glycan (N-linked (GlcNAc...) asparagine) is linked at Asn-195. Residues 197–219 (TVLIATGCFIFLIPFGFVIISYV) traverse the membrane as a helical segment. At 220–236 (LIIRAILRIPSVSKKYK) the chain is on the cytoplasmic side. Residues 237–259 (AFSTCASHLGAVSLFYGTLCMVY) traverse the membrane as a helical segment. Residues 260 to 271 (LKPLHTFSVKDS) are Extracellular-facing. The chain crosses the membrane as a helical span at residues 272–291 (VATVMYAVVTPMMNPFIYSL). Residues 292–312 (RNKDMHGALGRLLDTHFKRLT) are Cytoplasmic-facing.

Belongs to the G-protein coupled receptor 1 family.

Its subcellular location is the cell membrane. Its function is as follows. Odorant receptor. The polypeptide is Olfactory receptor 1D2 (OR1D2) (Gorilla gorilla gorilla (Western lowland gorilla)).